The sequence spans 275 residues: Adenylate kinase (275 aa).

Glycine 54 to threonine 59 lines the ATP pocket. The segment at alanine 74 to valine 103 is NMP. Residues threonine 75, arginine 80, glycine 101–valine 103, glycine 130–arginine 133, and glutamine 137 each bind AMP. Residues glycine 171–aspartate 208 are LID. Residues arginine 172 and serine 181 to tyrosine 182 each bind ATP. AMP contacts are provided by arginine 205 and arginine 216. Position 244 (glutamine 244) interacts with ATP.

Belongs to the adenylate kinase family. AK2 subfamily. As to quaternary structure, monomer.

Its subcellular location is the cytoplasm. The protein resides in the cytosol. It localises to the mitochondrion intermembrane space. It carries out the reaction AMP + ATP = 2 ADP. In terms of biological role, catalyzes the reversible transfer of the terminal phosphate group between ATP and AMP. Plays an important role in cellular energy homeostasis and in adenine nucleotide metabolism. Adenylate kinase activity is critical for regulation of the phosphate utilization and the AMP de novo biosynthesis pathways. This Sclerotinia sclerotiorum (strain ATCC 18683 / 1980 / Ss-1) (White mold) protein is Adenylate kinase (adk1).